The chain runs to 184 residues: UPF0149 protein PputGB1_5261 (184 aa).

The protein belongs to the UPF0149 family.

The protein is UPF0149 protein PputGB1_5261 of Pseudomonas putida (strain GB-1).